Reading from the N-terminus, the 346-residue chain is N-acetyl-gamma-glutamyl-phosphate reductase (346 aa).

Cysteine 149 is a catalytic residue.

This sequence belongs to the NAGSA dehydrogenase family. Type 1 subfamily.

The protein resides in the cytoplasm. The catalysed reaction is N-acetyl-L-glutamate 5-semialdehyde + phosphate + NADP(+) = N-acetyl-L-glutamyl 5-phosphate + NADPH + H(+). The protein operates within amino-acid biosynthesis; L-arginine biosynthesis; N(2)-acetyl-L-ornithine from L-glutamate: step 3/4. Its function is as follows. Catalyzes the NADPH-dependent reduction of N-acetyl-5-glutamyl phosphate to yield N-acetyl-L-glutamate 5-semialdehyde. The polypeptide is N-acetyl-gamma-glutamyl-phosphate reductase (Geobacter metallireducens (strain ATCC 53774 / DSM 7210 / GS-15)).